A 1092-amino-acid chain; its full sequence is Electroneutral sodium bicarbonate exchanger 1 (1092 aa).

Disordered regions lie at residues 1–26 (MPAG…VDQG), 55–95 (LGRQ…HDTP), and 243–263 (KKQS…PQSA). Residues 1–478 (MPAGSNEPDG…DYRDALSLQC (478 aa)) are Extracellular-facing. The span at 58 to 76 (QSHRHHRTHGQKHRRRGGR) shows a compositional bias: basic residues. Over residues 243–255 (KKQSDPHSMDRDG) the composition is skewed to basic and acidic residues. Residues 479 to 499 (LASFLFLYCACMSPVITFGGL) traverse the membrane as a helical segment. The Cytoplasmic segment spans residues 500–507 (LGEATEGR). The helical transmembrane segment at 508 to 528 (ISAIESLFGASMTGIAYSLFA) threads the bilayer. At 529-565 (GQPLTILGSTGPVLVFEKILFKFCKDYALSYLSLRAC) the chain is on the extracellular side. The chain crosses the membrane as a helical span at residues 566–586 (IGLWTAFLCIVLVATDASSLV). At 587–595 (CYITRFTEE) the chain is on the cytoplasmic side. Residues 596 to 616 (AFASLICIIFIYEAIEKLIHL) form a helical membrane-spanning segment. Over 617–687 (AETYPIHMHS…EFIGSACGHH (71 aa)) the chain is Extracellular. 2 disulfide bridges follow: Cys-636–Cys-684 and Cys-638–Cys-672. Residues Asn-646 and Asn-666 are each glycosylated (N-linked (GlcNAc) asparagine). A helical membrane pass occupies residues 688-708 (GPYTPDVLFWSCILFFATFIV). The Cytoplasmic segment spans residues 709-731 (SSTLKTFKTSRYFPTRVRSTVSD). Residues 732-752 (FAVFLTIFTMVILDFLIGVPS) form a helical membrane-spanning segment. Over 753-778 (PKLQVPSVFKPTRDDRGWFISPIGPN) the chain is Extracellular. The chain crosses the membrane as a helical span at residues 779-799 (PWWTVIAAIIPALLCTILIFM). Over 800–824 (DQQITAVIINRKEHKLKKGCGYHLD) the chain is Cytoplasmic. Residues 825-845 (LLVVAIMLGVCSLMGLPWFVA) form a helical membrane-spanning segment. Residues 846-881 (ATVLSITHVNSLKLESECSAPGEQPKFLGIREQRVT) are Extracellular-facing. The chain crosses the membrane as a helical span at residues 882–902 (GLMIFVLMGCSVFMTAVLKFI). Residues 903-904 (PM) are Cytoplasmic-facing. The helical transmembrane segment at 905-925 (PVLYGVFLYMGVSSLQGIQFF) threads the bilayer. Residues 926 to 962 (DRLKLFGMPAKHQPDFIYLRHVPLRKVHLFTLVQLTC) lie on the Extracellular side of the membrane. Residues 963–983 (LVLLWVIKASPAAIVFPMMVL) traverse the membrane as a helical segment. Residues 984-1092 (ALVFVRKVMD…GNTKEKSPFN (109 aa)) are Cytoplasmic-facing.

This sequence belongs to the anion exchanger (TC 2.A.31) family. In terms of assembly, homodimer. As to expression, expressed in the Purkinje cells and dendrites in the molecular layer of the cerebellum (at protein level). Expressed in the hippocampal neurons (at protein level). Strong expression observed in testis and moderate expression in kidney inner medulla, the submandibular gland, eye, cerebrum and cerebellum.

Its subcellular location is the cell membrane. The protein resides in the apical cell membrane. The protein localises to the basolateral cell membrane. It is found in the cytoplasmic vesicle. It localises to the secretory vesicle. Its subcellular location is the synaptic vesicle membrane. The catalysed reaction is 2 hydrogencarbonate(out) + chloride(in) + Na(+)(out) = 2 hydrogencarbonate(in) + chloride(out) + Na(+)(in). In terms of biological role, mediates electroneutral sodium- and carbonate-dependent chloride-HCO3(-) exchange with a Na(+):HCO3(-) stoichiometry of 2:1. Plays a major role in pH regulation in neurons. Mediates sodium reabsorption in the renal cortical collecting ducts. The chain is Electroneutral sodium bicarbonate exchanger 1 from Rattus norvegicus (Rat).